Reading from the N-terminus, the 394-residue chain is NAD(P)H-quinone oxidoreductase subunit H (394 aa).

The protein belongs to the complex I 49 kDa subunit family. NDH-1 can be composed of about 15 different subunits; different subcomplexes with different compositions have been identified which probably have different functions.

It is found in the cellular thylakoid membrane. It catalyses the reaction a plastoquinone + NADH + (n+1) H(+)(in) = a plastoquinol + NAD(+) + n H(+)(out). It carries out the reaction a plastoquinone + NADPH + (n+1) H(+)(in) = a plastoquinol + NADP(+) + n H(+)(out). Its function is as follows. NDH-1 shuttles electrons from an unknown electron donor, via FMN and iron-sulfur (Fe-S) centers, to quinones in the respiratory and/or the photosynthetic chain. The immediate electron acceptor for the enzyme in this species is believed to be plastoquinone. Couples the redox reaction to proton translocation, and thus conserves the redox energy in a proton gradient. Cyanobacterial NDH-1 also plays a role in inorganic carbon-concentration. The protein is NAD(P)H-quinone oxidoreductase subunit H of Prochlorococcus marinus (strain SARG / CCMP1375 / SS120).